The primary structure comprises 151 residues: Small ribosomal subunit protein uS19 (151 aa).

Ala-2 is subject to N-acetylalanine.

Belongs to the universal ribosomal protein uS19 family.

Functionally, negatively regulates lifespan. The sequence is that of Small ribosomal subunit protein uS19 from Caenorhabditis elegans.